Reading from the N-terminus, the 418-residue chain is S-adenosylmethionine synthase (418 aa).

ATP is bound at residue histidine 16. Aspartate 18 is a Mg(2+) binding site. Glutamate 44 is a K(+) binding site. L-methionine-binding residues include glutamate 57 and glutamine 100. Residues 100 to 110 (QSPDISQGVTK) are flexible loop. ATP contacts are provided by residues 175–177 (DGK), 251–252 (KF), aspartate 260, 266–267 (RK), alanine 283, and lysine 287. Residue aspartate 260 participates in L-methionine binding. Residue lysine 291 participates in L-methionine binding.

This sequence belongs to the AdoMet synthase family. As to quaternary structure, homotetramer; dimer of dimers. Mg(2+) is required as a cofactor. The cofactor is K(+).

It localises to the cytoplasm. It carries out the reaction L-methionine + ATP + H2O = S-adenosyl-L-methionine + phosphate + diphosphate. Its pathway is amino-acid biosynthesis; S-adenosyl-L-methionine biosynthesis; S-adenosyl-L-methionine from L-methionine: step 1/1. Functionally, catalyzes the formation of S-adenosylmethionine (AdoMet) from methionine and ATP. The overall synthetic reaction is composed of two sequential steps, AdoMet formation and the subsequent tripolyphosphate hydrolysis which occurs prior to release of AdoMet from the enzyme. The protein is S-adenosylmethionine synthase of Gloeothece citriformis (strain PCC 7424) (Cyanothece sp. (strain PCC 7424)).